A 219-amino-acid polypeptide reads, in one-letter code: Thiopurine S-methyltransferase (219 aa).

Positions 10, 45, 66, and 123 each coordinate S-adenosyl-L-methionine.

It belongs to the class I-like SAM-binding methyltransferase superfamily. TPMT family.

It localises to the cytoplasm. It carries out the reaction S-adenosyl-L-methionine + a thiopurine = S-adenosyl-L-homocysteine + a thiopurine S-methylether.. The protein is Thiopurine S-methyltransferase of Bordetella bronchiseptica (strain ATCC BAA-588 / NCTC 13252 / RB50) (Alcaligenes bronchisepticus).